Consider the following 110-residue polypeptide: MHELSIARSVVDICTENAGGRRVCSVTIEIGALSGVATESIRFCFDACTRGTLLENALLLIEHVPASGRCRQCNSEFPVKACYDPCPACGGVGMDLITGEELRVKGLTVV.

H2 provides a ligand contact to Ni(2+). Zn(2+) contacts are provided by C70, C73, C86, and C89.

The protein belongs to the HypA/HybF family.

Functionally, involved in the maturation of [NiFe] hydrogenases. Required for nickel insertion into the metal center of the hydrogenase. This chain is Hydrogenase maturation factor HypA, found in Geotalea daltonii (strain DSM 22248 / JCM 15807 / FRC-32) (Geobacter daltonii).